We begin with the raw amino-acid sequence, 226 residues long: MNQLPTWHDVIGEEKQQSYFVDTLNFVEAERAAGKAIYPPAKDVFNAFRFTEFNDVKVVILGQDPYHGPNQAHGLCFSVLPGIKTPPSLVNMYKELAQDIEGFQIPQHGFLQSWAEQGVLLLNTVLTVEQGKAHSHSKTGWETFTDRVIEAINQHQEGVVFLLWGSHAQKKGRFIDRNKHHVLTAPHPSPLSAHRGFFGSKPFSQANQILVQQGKEVINWHLPMTV.

Catalysis depends on Asp-64, which acts as the Proton acceptor.

It belongs to the uracil-DNA glycosylase (UDG) superfamily. UNG family.

The protein localises to the cytoplasm. It carries out the reaction Hydrolyzes single-stranded DNA or mismatched double-stranded DNA and polynucleotides, releasing free uracil.. In terms of biological role, excises uracil residues from the DNA which can arise as a result of misincorporation of dUMP residues by DNA polymerase or due to deamination of cytosine. The chain is Uracil-DNA glycosylase from Vibrio campbellii (strain ATCC BAA-1116).